The following is a 215-amino-acid chain: Probable nicotinate-nucleotide adenylyltransferase (215 aa).

This sequence belongs to the NadD family.

The enzyme catalyses nicotinate beta-D-ribonucleotide + ATP + H(+) = deamido-NAD(+) + diphosphate. It participates in cofactor biosynthesis; NAD(+) biosynthesis; deamido-NAD(+) from nicotinate D-ribonucleotide: step 1/1. Functionally, catalyzes the reversible adenylation of nicotinate mononucleotide (NaMN) to nicotinic acid adenine dinucleotide (NaAD). The polypeptide is Probable nicotinate-nucleotide adenylyltransferase (Coxiella burnetii (strain RSA 331 / Henzerling II)).